A 608-amino-acid chain; its full sequence is Glutamine--fructose-6-phosphate aminotransferase [isomerizing] (608 aa).

C2 functions as the Nucleophile; for GATase activity in the catalytic mechanism. Residues 2 to 218 (CGICGIVGHQ…DGDWCELTPD (217 aa)) enclose the Glutamine amidotransferase type-2 domain. 2 SIS domains span residues 284 to 423 (MPFD…ARGT) and 456 to 598 (MAAV…VDQP). K603 serves as the catalytic For Fru-6P isomerization activity.

As to quaternary structure, homodimer.

It is found in the cytoplasm. It catalyses the reaction D-fructose 6-phosphate + L-glutamine = D-glucosamine 6-phosphate + L-glutamate. Catalyzes the first step in hexosamine metabolism, converting fructose-6P into glucosamine-6P using glutamine as a nitrogen source. This Gluconobacter oxydans (strain 621H) (Gluconobacter suboxydans) protein is Glutamine--fructose-6-phosphate aminotransferase [isomerizing].